Consider the following 600-residue polypeptide: Elongation factor 4 (600 aa).

The region spanning 7–189 (SLIRNFSIIA…ALVQRLPAPT (183 aa)) is the tr-type G domain. GTP contacts are provided by residues 19–24 (DHGKST) and 136–139 (NKID).

This sequence belongs to the TRAFAC class translation factor GTPase superfamily. Classic translation factor GTPase family. LepA subfamily.

It is found in the cell inner membrane. It carries out the reaction GTP + H2O = GDP + phosphate + H(+). Required for accurate and efficient protein synthesis under certain stress conditions. May act as a fidelity factor of the translation reaction, by catalyzing a one-codon backward translocation of tRNAs on improperly translocated ribosomes. Back-translocation proceeds from a post-translocation (POST) complex to a pre-translocation (PRE) complex, thus giving elongation factor G a second chance to translocate the tRNAs correctly. Binds to ribosomes in a GTP-dependent manner. This chain is Elongation factor 4, found in Gluconobacter oxydans (strain 621H) (Gluconobacter suboxydans).